Here is a 991-residue protein sequence, read N- to C-terminus: 5'-3' exoribonuclease 2 (991 aa).

Positions 264–268 match the Nuclear localization signal motif; it reads TKKTK. Residues 404-418 show a composition bias toward basic and acidic residues; it reads RRNENYRRRQQRESN. Disordered stretches follow at residues 404–461, 547–582, and 872–991; these read RRNE…TQKI, SIES…ENTD, and AERS…NGYY. Over residues 433-452 the composition is skewed to low complexity; the sequence is SVETQSTEVVTSSKSTSVDT. Low complexity-rich tracts occupy residues 878–889 and 896–910; these read SRRNNGNSYRGG and RRSY…RQSY. The segment covering 926–938 has biased composition (polar residues); sequence WSGNGNFPRSNAS. A compositionally biased stretch (gly residues) spans 946–958; that stretch reads EGYGGRSRGGGYS. A compositionally biased stretch (polar residues) spans 980-991; that stretch reads ESYNNNNRNGYY.

It belongs to the 5'-3' exonuclease family. XRN2/RAT1 subfamily. In terms of assembly, interacts with din1/rai1; the interaction is direct, stabilizes dhp1 protein structure and may stimulate its exoribonuclease activity. The interaction also stimulates din1 pyrophosphohydrolase activity, probably by recruiting it to mRNA substrates.

It localises to the nucleus. In terms of biological role, possesses 5'-&gt;3' exoribonuclease activity. Required for the processing of nuclear mRNA and rRNA precursors. May promote the termination of transcription by RNA polymerase II. Essential for vegetative cell growth and chromosome segregation. This is 5'-3' exoribonuclease 2 (dhp1) from Schizosaccharomyces pombe (strain 972 / ATCC 24843) (Fission yeast).